Reading from the N-terminus, the 293-residue chain is Ribonuclease H2 subunit B (293 aa).

The interval 251 to 278 is disordered; it reads KRPQNSDITSSLLKKPNRKQATKKSKYF. A compositionally biased stretch (basic residues) spans 265 to 276; that stretch reads KPNRKQATKKSK.

This sequence belongs to the RNase H2 subunit B family. In terms of assembly, component of the RNase H2 complex.

The protein localises to the nucleus. It is found in the cytoplasm. Its function is as follows. Non catalytic subunit of RNase H2, an endonuclease that specifically degrades the RNA of RNA:DNA hybrids. Participates in DNA replication, possibly by mediating the removal of lagging-strand Okazaki fragment RNA primers during DNA replication. Mediates the excision of single ribonucleotides from DNA:RNA duplexes. This chain is Ribonuclease H2 subunit B (rnh202), found in Schizosaccharomyces pombe (strain 972 / ATCC 24843) (Fission yeast).